Reading from the N-terminus, the 95-residue chain is Co-chaperonin GroES (95 aa).

This sequence belongs to the GroES chaperonin family. As to quaternary structure, heptamer of 7 subunits arranged in a ring. Interacts with the chaperonin GroEL.

The protein localises to the cytoplasm. Functionally, together with the chaperonin GroEL, plays an essential role in assisting protein folding. The GroEL-GroES system forms a nano-cage that allows encapsulation of the non-native substrate proteins and provides a physical environment optimized to promote and accelerate protein folding. GroES binds to the apical surface of the GroEL ring, thereby capping the opening of the GroEL channel. The chain is Co-chaperonin GroES from Aliivibrio salmonicida (strain LFI1238) (Vibrio salmonicida (strain LFI1238)).